We begin with the raw amino-acid sequence, 300 residues long: Ribosomal RNA small subunit methyltransferase H (300 aa).

S-adenosyl-L-methionine is bound by residues 46 to 48, Asp-65, Phe-92, Asp-107, and Gln-114; that span reads GGH.

Belongs to the methyltransferase superfamily. RsmH family.

The protein localises to the cytoplasm. The catalysed reaction is cytidine(1402) in 16S rRNA + S-adenosyl-L-methionine = N(4)-methylcytidine(1402) in 16S rRNA + S-adenosyl-L-homocysteine + H(+). Specifically methylates the N4 position of cytidine in position 1402 (C1402) of 16S rRNA. This Prochlorococcus marinus (strain MIT 9215) protein is Ribosomal RNA small subunit methyltransferase H.